The primary structure comprises 889 residues: Extended synaptotagmin-3 (889 aa).

A disordered region spans residues 1–65 (MAQGDPGGQT…GPRDPGQGGA (65 aa)). The Cytoplasmic segment spans residues 1–66 (MAQGDPGGQT…PRDPGQGGAG (66 aa)). 2 stretches are compositionally biased toward basic and acidic residues: residues 17–28 (TDKKPDEPKATE) and 41–58 (PGGEKGLRDPPGGEKGPR). 2 helical membrane-spanning segments follow: residues 67 to 91 (EALAEALYGLGRPVLRAVLYLFPVY) and 92 to 112 (LCGRFGLSPTWLLFGLFLWMF). At 113–889 (WTRNKKFKLA…ELTPTGLPTS (777 aa)) the chain is on the cytoplasmic side. Positions 155-333 (DVERVEWLNK…LPNRFTVPLS (179 aa)) constitute an SMP-LTD domain. 2 consecutive C2 domains span residues 331-452 (PLSS…DEWF) and 468-618 (WLSL…STIK). Residues K363, D364, D376, D423, E424, D425, D427, D429, and D430 each contribute to the Ca(2+) site. The disordered stretch occupies residues 649-724 (SIKRAQSQQH…GAVPESHTPS (76 aa)). The span at 658–671 (HKSHGKSHQAHHQA) shows a compositional bias: basic residues. Composition is skewed to low complexity over residues 672-682 (HQTQQNHTVQQ) and 691-714 (ISTTSQQANTSSSNPAPNQNPNST). Positions 757-879 (MTGEVEVSVR…DLVKGFTKWF (123 aa)) constitute a C2 3 domain. Residues 804–811 (RKWSGRKK) are required for phosphatidylinositol 4,5-bisphosphate-dependent location at the cell membrane.

This sequence belongs to the extended synaptotagmin family.

The protein resides in the cell membrane. Its subcellular location is the endoplasmic reticulum membrane. Tethers the endoplasmic reticulum to the cell membrane and promotes the formation of appositions between the endoplasmic reticulum and the cell membrane. Binds glycerophospholipids in a barrel-like domain and may play a role in cellular lipid transport. In Xenopus tropicalis (Western clawed frog), this protein is Extended synaptotagmin-3 (esyt3).